The sequence spans 563 residues: Eukaryotic translation initiation factor 3 subunit D-1 (563 aa).

The segment at 98–167 (VQKPPHQRGR…GPPPKMRESS (70 aa)) is disordered. The span at 100–121 (KPPHQRGRFRNMRNSRSGRGRN) shows a compositional bias: basic residues. Threonine 128 carries the phosphothreonine modification. Residues 291–305 (EFDLLTVNESSVEPP) form an RNA gate region.

It belongs to the eIF-3 subunit D family. Component of the eukaryotic translation initiation factor 3 (eIF-3) complex. The eIF-3 complex interacts with pix.

The protein resides in the cytoplasm. MRNA cap-binding component of the eukaryotic translation initiation factor 3 (eIF-3) complex, which is involved in protein synthesis of a specialized repertoire of mRNAs and, together with other initiation factors, stimulates binding of mRNA and methionyl-tRNAi to the 40S ribosome. The eIF-3 complex specifically targets and initiates translation of a subset of mRNAs involved in cell proliferation. In the eIF-3 complex, eif3d specifically recognizes and binds the 7-methylguanosine cap of a subset of mRNAs. The polypeptide is Eukaryotic translation initiation factor 3 subunit D-1 (Drosophila grimshawi (Hawaiian fruit fly)).